A 276-amino-acid polypeptide reads, in one-letter code: MAIRSYRILTPDTRNRSVSGFDGRVQLDPQKKLTSGQHHCGKGRNGRGIITARHRGGGHKRLYRQIDFRRNKEHISGEIVTIEYDPNRSAYICKVHYKNGDKMYILHPRGVMIGDTILSGPKAPISIGNALPLTNMPLGTAIHNIEITLGKGGQLARAAGAVAELIAKEDRSATLRLPSGEVRLISENCSATIGQVGNITANNRSFGKAGAKRWLGKRSEVRGVAMNPVDHPHGGGEGRTPIGRKKPVTPWGYSALGKKSRKRNRYSDASILRRRE.

The tract at residues 225-276 (AMNPVDHPHGGGEGRTPIGRKKPVTPWGYSALGKKSRKRNRYSDASILRRRE) is disordered.

Belongs to the universal ribosomal protein uL2 family. In terms of assembly, part of the 50S ribosomal subunit.

Its subcellular location is the plastid. The protein localises to the chloroplast. The polypeptide is Large ribosomal subunit protein uL2c (rpl2) (Pinus thunbergii (Japanese black pine)).